The sequence spans 204 residues: N-(5'-phosphoribosyl)anthranilate isomerase (204 aa).

Belongs to the TrpF family.

The catalysed reaction is N-(5-phospho-beta-D-ribosyl)anthranilate = 1-(2-carboxyphenylamino)-1-deoxy-D-ribulose 5-phosphate. Its pathway is amino-acid biosynthesis; L-tryptophan biosynthesis; L-tryptophan from chorismate: step 3/5. This is N-(5'-phosphoribosyl)anthranilate isomerase from Bacillus anthracis (strain A0248).